Here is a 290-residue protein sequence, read N- to C-terminus: Putative transport permease ycf38 (290 aa).

7 consecutive transmembrane segments (helical) span residues 21-41, 46-66, 86-106, 133-153, 167-187, 194-213, and 261-281; these read VTSF…FIQL, ITLI…GALF, PGIL…PLIF, FFIS…GVFL, FFFL…LALL, LIAV…TALA, and INIG…FLLF. The ABC transmembrane type-2 domain maps to 46 to 284; the sequence is ITLISGILQP…LVGFLLFKKI (239 aa).

This sequence belongs to the ABC-2 integral membrane protein family.

It is found in the plastid. The protein localises to the cyanelle membrane. The protein is Putative transport permease ycf38 (ycf38) of Cyanophora paradoxa.